Consider the following 2238-residue polypeptide: RNA-directed RNA polymerase L (2238 aa).

Positions 26 to 284 (ITLVTCQNDA…THHSEHPVDC (259 aa)) are endonuclease. 3 residues coordinate Mn(2+): glutamate 51, aspartate 89, and glutamate 102. Lysine 115 is an active-site residue. One can recognise a RdRp catalytic domain in the interval 1188-1387 (TDMKMCVNLG…FISTKFNKFV (200 aa)). Position 1346 (aspartate 1346) interacts with Mg(2+).

This sequence belongs to the Bunyavirales RNA polymerase family. In terms of assembly, homomultimer; the oligomeric structure is essential for the polymerase activity. Interacts with nucleoprotein N. Interacts with protein Z; this interaction inhibits viral transcription and replication, Z partially blocks the product exit tunnel for the releasing nascent RNA product. Mn(2+) serves as cofactor. Mg(2+) is required as a cofactor.

The protein localises to the virion. It localises to the host cytoplasm. The catalysed reaction is RNA(n) + a ribonucleoside 5'-triphosphate = RNA(n+1) + diphosphate. Its function is as follows. RNA-dependent RNA polymerase, which is responsible for the replication and transcription of the viral RNA genome using antigenomic RNA as an intermediate. During transcription, synthesizes subgenomic RNAs and assures their capping by a cap-snatching mechanism, which involves the endonuclease activity cleaving the host capped pre-mRNAs. These short capped RNAs are then used as primers for viral transcription. The 3'-end of subgenomic mRNAs molecules are heterogeneous and not polyadenylated. The replicase function is to direct synthesis of antigenomic and genomic RNA which are encapsidated and non capped. As a consequence of the use of the same enzyme for both transcription and replication, these mechanisms need to be well coordinated. These processes may be regulated by proteins N and Z in a dose-dependent manner. Z protein inhibits the viral polymerase L und thus the viral transcription and RNA synthesis. This is RNA-directed RNA polymerase L from Calomys callosus (Large vesper mouse).